A 439-amino-acid chain; its full sequence is Skin secretory protein xP2 (439 aa).

The signal sequence occupies residues 1–22 (MNHKLFCVHFLLLILSVCYIQG). A disordered region spans residues 25–351 (AGGEPAPAEG…VEVGPKTEDC (327 aa)). 5 tandem repeats follow at residues 26 to 33 (GGEPAPAE), 34 to 41 (GVAPAPAE), 42 to 51 (GGAPAPAPAE), 52 to 59 (GEAPAPAE), and 60 to 69 (GGAPAPAPAE). The 33 X approximate repeats of G-G(0,1)-[EV](0,1)-A-P-[A-P](1,3)-A-E stretch occupies residues 26–343 (GGEPAPAEGV…APAPAPAPVE (318 aa)). Over residues 26–345 (GGEPAPAEGV…APAPAPVEVG (320 aa)) the composition is skewed to low complexity. The 6; approximate repeat unit spans residues 70-77 (GAEPAPAD). 9 tandem repeats follow at residues 78 to 87 (GGAPAPAPAE), 88 to 97 (GGAPAPAPAE), 98 to 107 (GGAPAPAPAE), 108 to 115 (GGAPAPAE), 116 to 125 (GGAPAPAPAE), 126 to 135 (GEAPAPAPAE), 136 to 145 (GEAPAPAPAE), 146 to 153 (GEAPAPAE), and 154 to 163 (GEAPAPAPAE). The stretch at 164 to 173 (VEAPAPAPAE) is one 16; approximate repeat. Repeat copies occupy residues 174–183 (GEAPAPAPAE), 184–193 (GEAPAPAPAE), 194–203 (GEAPAPAPAE), 204–215 (GEAPAPAPAPAE), 216–225 (GEAPAPAPAE), 226–235 (GEAPAPAPAE), 236–245 (GEAPAPAPAE), 246–255 (GEAPAPAPAE), 256–265 (GEAPAPAPAE), 266–275 (GEAPAPAPAE), 276–285 (GEAPAPAPAE), 286–293 (GEAPAPAE), 294–303 (GEAPAPAPAE), and 304–313 (GEAPAPAPAE). The stretch at 314 to 321 (GGAPSPAE) is one 31; approximate repeat. The stretch at 322-331 (GGAPAAAPAE) is one 32; approximate repeat. The 33; approximate repeat unit spans residues 332 to 343 (GGAPAPAPAPVE). P-type domains lie at 349-392 (EDCK…FFPR) and 396-439 (AQCL…FHQK). Intrachain disulfides connect Cys-351-Cys-377, Cys-361-Cys-376, Cys-371-Cys-388, Cys-398-Cys-424, Cys-408-Cys-423, and Cys-418-Cys-435.

Skin.

Its subcellular location is the secreted. May act as a growth factor in the germinal layer of the epidermis. May also be involved in growth of regenerating glands and in protection of the skin from the external environment. The chain is Skin secretory protein xP2 (p2) from Xenopus laevis (African clawed frog).